Consider the following 874-residue polypeptide: Alanine--tRNA ligase (874 aa).

Residues histidine 562, histidine 566, cysteine 665, and histidine 669 each contribute to the Zn(2+) site.

It belongs to the class-II aminoacyl-tRNA synthetase family. The cofactor is Zn(2+).

The protein localises to the cytoplasm. It carries out the reaction tRNA(Ala) + L-alanine + ATP = L-alanyl-tRNA(Ala) + AMP + diphosphate. Catalyzes the attachment of alanine to tRNA(Ala) in a two-step reaction: alanine is first activated by ATP to form Ala-AMP and then transferred to the acceptor end of tRNA(Ala). Also edits incorrectly charged Ser-tRNA(Ala) and Gly-tRNA(Ala) via its editing domain. The sequence is that of Alanine--tRNA ligase from Pseudomonas putida (strain ATCC 700007 / DSM 6899 / JCM 31910 / BCRC 17059 / LMG 24140 / F1).